Consider the following 287-residue polypeptide: Nucleotide-binding protein Sfri_3380 (287 aa).

An ATP-binding site is contributed by 8 to 15; sequence GRSGSGKS. GTP is bound at residue 56-59; that stretch reads DVRN.

This sequence belongs to the RapZ-like family.

Its function is as follows. Displays ATPase and GTPase activities. The polypeptide is Nucleotide-binding protein Sfri_3380 (Shewanella frigidimarina (strain NCIMB 400)).